An 80-amino-acid polypeptide reads, in one-letter code: Exodeoxyribonuclease 7 small subunit (80 aa).

Belongs to the XseB family. In terms of assembly, heterooligomer composed of large and small subunits.

The protein resides in the cytoplasm. It catalyses the reaction Exonucleolytic cleavage in either 5'- to 3'- or 3'- to 5'-direction to yield nucleoside 5'-phosphates.. In terms of biological role, bidirectionally degrades single-stranded DNA into large acid-insoluble oligonucleotides, which are then degraded further into small acid-soluble oligonucleotides. In Pseudomonas aeruginosa (strain LESB58), this protein is Exodeoxyribonuclease 7 small subunit.